A 283-amino-acid chain; its full sequence is NAD kinase (283 aa).

The Proton acceptor role is filled by aspartate 66. NAD(+)-binding positions include 66–67 (DG), 140–141 (ND), arginine 151, arginine 168, aspartate 170, and glutamine 240.

The protein belongs to the NAD kinase family. The cofactor is a divalent metal cation.

Its subcellular location is the cytoplasm. It carries out the reaction NAD(+) + ATP = ADP + NADP(+) + H(+). Functionally, involved in the regulation of the intracellular balance of NAD and NADP, and is a key enzyme in the biosynthesis of NADP. Catalyzes specifically the phosphorylation on 2'-hydroxyl of the adenosine moiety of NAD to yield NADP. In Syntrophobacter fumaroxidans (strain DSM 10017 / MPOB), this protein is NAD kinase.